The chain runs to 188 residues: Probable nicotinate-nucleotide adenylyltransferase (188 aa).

This sequence belongs to the NadD family.

It carries out the reaction nicotinate beta-D-ribonucleotide + ATP + H(+) = deamido-NAD(+) + diphosphate. Its pathway is cofactor biosynthesis; NAD(+) biosynthesis; deamido-NAD(+) from nicotinate D-ribonucleotide: step 1/1. In terms of biological role, catalyzes the reversible adenylation of nicotinate mononucleotide (NaMN) to nicotinic acid adenine dinucleotide (NaAD). The chain is Probable nicotinate-nucleotide adenylyltransferase from Listeria welshimeri serovar 6b (strain ATCC 35897 / DSM 20650 / CCUG 15529 / CIP 8149 / NCTC 11857 / SLCC 5334 / V8).